We begin with the raw amino-acid sequence, 648 residues long: DNA ligase (648 aa).

Residues 30 to 34, 79 to 80, and Glu-108 contribute to the NAD(+) site; these read DEEYD and SM. Lys-110 serves as the catalytic N6-AMP-lysine intermediate. NAD(+) is bound by residues Arg-131, Glu-165, Lys-280, and Lys-304. Residues Cys-398, Cys-401, Cys-414, and Cys-419 each coordinate Zn(2+). In terms of domain architecture, BRCT spans 573 to 648; the sequence is AKENPFKGKI…LTEDEMRAML (76 aa).

The protein belongs to the NAD-dependent DNA ligase family. LigA subfamily. Mg(2+) is required as a cofactor. Requires Mn(2+) as cofactor.

The catalysed reaction is NAD(+) + (deoxyribonucleotide)n-3'-hydroxyl + 5'-phospho-(deoxyribonucleotide)m = (deoxyribonucleotide)n+m + AMP + beta-nicotinamide D-nucleotide.. In terms of biological role, DNA ligase that catalyzes the formation of phosphodiester linkages between 5'-phosphoryl and 3'-hydroxyl groups in double-stranded DNA using NAD as a coenzyme and as the energy source for the reaction. It is essential for DNA replication and repair of damaged DNA. The chain is DNA ligase from Sulfurovum sp. (strain NBC37-1).